The chain runs to 1039 residues: RNA-binding protein Unr (1039 aa).

The segment covering 49–62 has biased composition (polar residues); the sequence is TTLGLQPQGQGPSP. Disordered stretches follow at residues 49–126 and 165–184; these read TTLG…QQQH and SIFGSQSSNSSAAAADPSQT. Low complexity-rich tracts occupy residues 63-80, 89-126, and 165-182; these read QQQQHQQQQQQQQQQHQQ, QQHMQQQQQQQQHQQQHQQQQHQQQQQHQQQQQQQQQH, and SIFGSQSSNSSAAAADPS. The region spanning 186 to 250 is the CSD 1 domain; the sequence is RETGIIEKLL…GKPIASQVSK (65 aa). The CSD 2; degenerate domain maps to 261–337; it reads RVTGTVTTEL…GNLGACHIRL (77 aa). The 69-residue stretch at 345 to 413 folds into the CSD 3 domain; it reads KYRGVVCSMK…GREFACNITR (69 aa). The region spanning 428-503 is the CSD 4; degenerate domain; that stretch reads VYKGQVLKSL…RDQLQRATSI (76 aa). Positions 517–585 constitute a CSD 5 domain; the sequence is REQGTIASLK…SRLQAIRIKH (69 aa). Residues 593 to 673 form the CSD 6; degenerate domain; sequence FETLVASNIE…KECIAVNVQQ (81 aa). Residues 721–741 are disordered; the sequence is QNGYVMHGSPGGSTSSVGSNN. The span at 732–741 shows a compositional bias: low complexity; that stretch reads GSTSSVGSNN. The CSD 7 domain maps to 763–831; that stretch reads VYRGFIAVMK…NCLPAENVRM (69 aa). Residues 846–919 enclose the CSD 8; degenerate domain; it reads THNGVVARPL…SGRAACVNAV (74 aa). One can recognise a CSD 9 domain in the interval 922–987; the sequence is KKRATVDSIK…GKSSACNVLK (66 aa).

Belongs to the UNR family. In terms of assembly, interacts with Sxl; cooperates with Sxl to prevent translation of msl-2 transcripts. Interacts with mle; promoting association between mle and roX2 non-coding RNA. Interacts (via CSD domain 7-9) with pAbp; promoting translation inhibition of msl-2 transcripts.

Its subcellular location is the cytoplasm. Functionally, RNA-binding protein that acts as a regulator of dosage compensation in both males and females. In males, acts as positive regulator of dosage compensation by promoting assembly of the MSL complex, a multiprotein complex that mediates X-chromosome dosage compensation. Promotes MSL complex assembly via association with roX1 and roX2 non-coding RNA components of the MSL complex, facilitating the interaction between non-coding RNAs and mle. In females, acts as an inhibitor of dosage compensation together with Sxl by preventing production of msl-2 protein, an essential component of the MSL complex. Specifically binds to the 3'-UTR of msl-2 transcripts, and cooperates with Sxl to prevent translation initiation of msl-2 transcripts. Mechanistically, Sxl and Unr inhibit translation initiation by preventing ribosome recruitment after pAbp-mediated recruitment of the eIF4F complex. The sequence is that of RNA-binding protein Unr from Drosophila melanogaster (Fruit fly).